A 201-amino-acid polypeptide reads, in one-letter code: MVNSCCGSVCSDQGCGLENCCRPSCCQTTCCRTTCCRPSCCVSSCCRPQCCQSVCCQPTCCRPSCCQTTCCRTTCCRPSCCVSSCCRPQCCQSVCCQPTCCRPSCCQTTCCRTTCCRPSCCVSSCCRPQCCQSVCCQPTCCRPSCCISSSCCPSCCESSCCRPCCCLRPVCGRVSCHTTCYRPTCVISTCPRPLCCASSCC.

Repeat copies occupy residues 5–9 (CCGSV), 20–24 (CCRPS), 25–29 (CCQTT), 30–34 (CCRTT), 35–39 (CCRPS), 40–44 (CCVSS), 45–49 (CCRPQ), 50–54 (CCQSV), 55–59 (CCQPT), 60–64 (CCRPS), 65–69 (CCQTT), 70–74 (CCRTT), 75–79 (CCRPS), 80–84 (CCVSS), 85–89 (CCRPQ), 90–94 (CCQSV), 95–99 (CCQPT), 100–104 (CCRPS), 105–109 (CCQTT), 110–114 (CCRTT), 115–119 (CCRPS), 120–124 (CCVSS), 125–129 (CCRPQ), 130–134 (CCQSV), 135–139 (CCQPT), 140–144 (CCRPS), 145–149 (CCISS), 155–159 (CCESS), 160–164 (CCRPC), and 165–169 (CCLRP). A 31 X 5 AA repeats of C-C-[GRQVIL]-[SPTR]-[VSTQPC] region spans residues 5 to 169 (CCGSVCSDQG…CCRPCCCLRP (165 aa)).

The protein belongs to the KRTAP type 4 family. In terms of assembly, interacts with hair keratins. As to expression, expressed in the hair follicles.

Functionally, in the hair cortex, hair keratin intermediate filaments are embedded in an interfilamentous matrix, consisting of hair keratin-associated proteins (KRTAP), which are essential for the formation of a rigid and resistant hair shaft through their extensive disulfide bond cross-linking with abundant cysteine residues of hair keratins. The matrix proteins include the high-sulfur and high-glycine-tyrosine keratins. This is Keratin-associated protein 4-12 (KRTAP4-12) from Homo sapiens (Human).